The following is a 636-amino-acid chain: Outer spore wall assembly protein SHE10 (636 aa).

Residues 1–23 (MRLVSKLLKALLVLLLAFGSVRY) form the signal peptide. 2 coiled-coil regions span residues 433–460 (RAHLRKLADEVNDHVEVLRQENVELFEE) and 551–584 (KANLEFQAREALERQQREKEKAESASMKASTEFE). A disordered region spans residues 565–607 (QQREKEKAESASMKASTEFELSSSSFSSSSPSTASSCTASSTS). Positions 579-607 (ASTEFELSSSSFSSSSPSTASSCTASSTS) are enriched in low complexity.

It belongs to the SHE10 family. As to quaternary structure, component of the mitochondria-localized RNase mitochondrial RNA-processing (RNase MRP) composed of one single RNA encoded by the NME1 gene and at least 31 proteins. Absent in the nucleus-localized RNase MRP (NuMRP).

The protein localises to the mitochondrion. Functionally, involved in spore wall assembly. May be a component of the mitochondrial RNase MRP (MtMRP), a ribonucleoprotein endoribonuclease involved in the cleaving RNA transcripts to generate primers for DNA replication in mitochondria. This is Outer spore wall assembly protein SHE10 from Kluyveromyces lactis (strain ATCC 8585 / CBS 2359 / DSM 70799 / NBRC 1267 / NRRL Y-1140 / WM37) (Yeast).